The following is a 353-amino-acid chain: tRNA-specific 2-thiouridylase MnmA (353 aa).

Residues 7-14 and leucine 33 each bind ATP; that span reads GLSGGVDS. The active-site Nucleophile is cysteine 94. Cysteine 94 and cysteine 193 form a disulfide bridge. Glycine 119 contacts ATP. An interaction with tRNA region spans residues 143–145; sequence KDQ. The active-site Cysteine persulfide intermediate is cysteine 193. The interval 298 to 299 is interaction with tRNA; that stretch reads RY.

It belongs to the MnmA/TRMU family.

It localises to the cytoplasm. The enzyme catalyses S-sulfanyl-L-cysteinyl-[protein] + uridine(34) in tRNA + AH2 + ATP = 2-thiouridine(34) in tRNA + L-cysteinyl-[protein] + A + AMP + diphosphate + H(+). Functionally, catalyzes the 2-thiolation of uridine at the wobble position (U34) of tRNA, leading to the formation of s(2)U34. The polypeptide is tRNA-specific 2-thiouridylase MnmA (Picosynechococcus sp. (strain ATCC 27264 / PCC 7002 / PR-6) (Agmenellum quadruplicatum)).